Reading from the N-terminus, the 621-residue chain is Phosphomethylpyrimidine synthase (621 aa).

A compositionally biased stretch (low complexity) spans 1-23 (MTAPFLSSLSPTSPLASATAPFP). The segment at 1-29 (MTAPFLSSLSPTSPLASATAPFPGSRKVY) is disordered. Substrate is bound by residues Asn-215, Met-244, Tyr-273, His-309, 329–331 (SRG), 370–373 (DGLR), and Glu-409. A Zn(2+)-binding site is contributed by His-413. Tyr-436 contacts substrate. His-477 is a binding site for Zn(2+). [4Fe-4S] cluster is bound by residues Cys-557, Cys-560, and Cys-565.

This sequence belongs to the ThiC family. In terms of assembly, homodimer. The cofactor is [4Fe-4S] cluster.

It catalyses the reaction 5-amino-1-(5-phospho-beta-D-ribosyl)imidazole + S-adenosyl-L-methionine = 4-amino-2-methyl-5-(phosphooxymethyl)pyrimidine + CO + 5'-deoxyadenosine + formate + L-methionine + 3 H(+). The protein operates within cofactor biosynthesis; thiamine diphosphate biosynthesis. In terms of biological role, catalyzes the synthesis of the hydroxymethylpyrimidine phosphate (HMP-P) moiety of thiamine from aminoimidazole ribotide (AIR) in a radical S-adenosyl-L-methionine (SAM)-dependent reaction. The chain is Phosphomethylpyrimidine synthase from Rhodospirillum rubrum (strain ATCC 11170 / ATH 1.1.1 / DSM 467 / LMG 4362 / NCIMB 8255 / S1).